A 335-amino-acid polypeptide reads, in one-letter code: Glycerol-3-phosphate dehydrogenase [NAD(P)+] (335 aa).

Residues serine 12, tryptophan 13, histidine 33, arginine 34, and lysine 108 each coordinate NADPH. The sn-glycerol 3-phosphate site is built by lysine 108, glycine 137, and threonine 139. An NADPH-binding site is contributed by alanine 141. Residues lysine 192, aspartate 245, serine 255, arginine 256, and asparagine 257 each coordinate sn-glycerol 3-phosphate. Residue lysine 192 is the Proton acceptor of the active site. Residue arginine 256 coordinates NADPH. Glutamate 282 contacts NADPH.

This sequence belongs to the NAD-dependent glycerol-3-phosphate dehydrogenase family.

The protein resides in the cytoplasm. The enzyme catalyses sn-glycerol 3-phosphate + NAD(+) = dihydroxyacetone phosphate + NADH + H(+). It catalyses the reaction sn-glycerol 3-phosphate + NADP(+) = dihydroxyacetone phosphate + NADPH + H(+). It functions in the pathway membrane lipid metabolism; glycerophospholipid metabolism. Catalyzes the reduction of the glycolytic intermediate dihydroxyacetone phosphate (DHAP) to sn-glycerol 3-phosphate (G3P), the key precursor for phospholipid synthesis. This chain is Glycerol-3-phosphate dehydrogenase [NAD(P)+], found in Methylococcus capsulatus (strain ATCC 33009 / NCIMB 11132 / Bath).